The sequence spans 319 residues: GTP cyclohydrolase MptA (319 aa).

It belongs to the GTP cyclohydrolase IV family. As to quaternary structure, homodimer. Fe(2+) is required as a cofactor.

The enzyme catalyses GTP + H2O = 7,8-dihydroneopterin 2',3'-cyclic phosphate + formate + diphosphate + H(+). Its pathway is cofactor biosynthesis; 5,6,7,8-tetrahydromethanopterin biosynthesis. Its function is as follows. Converts GTP to 7,8-dihydro-D-neopterin 2',3'-cyclic phosphate, the first intermediate in the biosynthesis of coenzyme methanopterin. This Methanosarcina barkeri (strain Fusaro / DSM 804) protein is GTP cyclohydrolase MptA.